Here is a 153-residue protein sequence, read N- to C-terminus: Transcriptional repressor NrdR (153 aa).

A zinc finger lies at 3-34 (CPFCGYEDTRVLDSRELSEGRAIRRRRECPQC). The region spanning 49–139 (ITVIKKDGRR…VYKDFREIDQ (91 aa)) is the ATP-cone domain.

This sequence belongs to the NrdR family. Zn(2+) is required as a cofactor.

In terms of biological role, negatively regulates transcription of bacterial ribonucleotide reductase nrd genes and operons by binding to NrdR-boxes. This is Transcriptional repressor NrdR from Fervidobacterium nodosum (strain ATCC 35602 / DSM 5306 / Rt17-B1).